A 297-amino-acid polypeptide reads, in one-letter code: MENLLSVENAILITGPTASGKSALAVELAKRHNGAVVNADSMQVYDTLRVLTARPSEEEMQGVPHHLYGHVPAWAGYSTGAWLRDVSALLPALRAAGQLPVFVGGTGLYFKALTGGLSDMPDIPEALREELRRRLVEEGTDALYAELSDVDPAMAAGLNRQDGQRIVRALEVTKATGRSIADFQGRSGPVVIDADEARKIVVLPDRAVLHARINGRFEKMLQQGAEDEVKALLALGLPAEAPVMKAIGVSQIAAMLKGEMTRDEVLEKGAAATRQYAKRQMTWFRNQMDDSWQRLTH.

15–22 serves as a coordination point for ATP; the sequence is GPTASGKS. 17 to 22 contacts substrate; that stretch reads TASGKS. Interaction with substrate tRNA regions lie at residues 40 to 43 and 164 to 168; these read DSMQ and QRIVR.

The protein belongs to the IPP transferase family. As to quaternary structure, monomer. It depends on Mg(2+) as a cofactor.

It catalyses the reaction adenosine(37) in tRNA + dimethylallyl diphosphate = N(6)-dimethylallyladenosine(37) in tRNA + diphosphate. In terms of biological role, catalyzes the transfer of a dimethylallyl group onto the adenine at position 37 in tRNAs that read codons beginning with uridine, leading to the formation of N6-(dimethylallyl)adenosine (i(6)A). This Rhizobium etli (strain ATCC 51251 / DSM 11541 / JCM 21823 / NBRC 15573 / CFN 42) protein is tRNA dimethylallyltransferase.